The primary structure comprises 869 residues: Iron-sulfur cluster assembly SufBD family protein ML0593 (869 aa).

In terms of domain architecture, DOD-type homing endonuclease spans 344–477; it reads LLGLWLGDGH…VRQLAIGCGL (134 aa).

It belongs to the iron-sulfur cluster assembly SufBD family. This protein undergoes a protein self splicing that involves a post-translational excision of the intervening region (intein) followed by peptide ligation.

The polypeptide is Iron-sulfur cluster assembly SufBD family protein ML0593 (Mycobacterium leprae (strain TN)).